Here is a 243-residue protein sequence, read N- to C-terminus: Tyrosine recombinase XerD-like (243 aa).

The region spanning 1 to 72 (MKEYIRPFLN…AVNQFLYFLY (72 aa)) is the Core-binding (CB) domain. One can recognise a Tyr recombinase domain in the interval 85–243 (LPKVSVSKEQ…KTMITLEKYR (159 aa)). Active-site residues include Lys-149 and Arg-210. Tyr-242 serves as the catalytic O-(3'-phospho-DNA)-tyrosine intermediate.

It belongs to the 'phage' integrase family. XerD-like subfamily.

The protein resides in the cytoplasm. Putative tyrosine recombinase. Not involved in the cutting and rejoining of the recombining DNA molecules on dif(SL) site. This chain is Tyrosine recombinase XerD-like, found in Streptococcus sanguinis (strain SK36).